The chain runs to 162 residues: MNPVRKKRLIIVLAIVAGVGAAVGLALSALQQNINLFYTPTQIANGEAPTDTRIRAGGLVEKGSLQRSEDSLNVRFVVTDGAKEVTIAYHGILPDLFREGQGIVALGKLGGDGVLVADEVLAKHDENYMPPEVTKALKDSGQLKHYENGKAAGETSYNQEGK.

The Cytoplasmic portion of the chain corresponds to 1–8; it reads MNPVRKKR. A helical; Signal-anchor for type II membrane protein transmembrane segment spans residues 9-29; that stretch reads LIIVLAIVAGVGAAVGLALSA. Over 30-162 the chain is Periplasmic; that stretch reads LQQNINLFYT…GETSYNQEGK (133 aa). Residues His-124 and Tyr-128 each contribute to the heme site. The segment covering 139–148 has biased composition (basic and acidic residues); it reads DSGQLKHYEN. The interval 139–162 is disordered; the sequence is DSGQLKHYENGKAAGETSYNQEGK.

Belongs to the CcmE/CycJ family.

It is found in the cell inner membrane. Its function is as follows. Heme chaperone required for the biogenesis of c-type cytochromes. Transiently binds heme delivered by CcmC and transfers the heme to apo-cytochromes in a process facilitated by CcmF and CcmH. This Pseudomonas aeruginosa (strain ATCC 15692 / DSM 22644 / CIP 104116 / JCM 14847 / LMG 12228 / 1C / PRS 101 / PAO1) protein is Cytochrome c-type biogenesis protein CcmE.